Reading from the N-terminus, the 1402-residue chain is Roundabout homolog 3 (1402 aa).

The N-terminal stretch at 1-20 (MLRYLLKTLLQMNLFADSLA) is a signal peptide. The Extracellular segment spans residues 21–891 (RDISNSSELL…ERLAKVLRKP (871 aa)). 3 N-linked (GlcNAc...) asparagine glycosylation sites follow: asparagine 25, asparagine 34, and asparagine 53. 5 Ig-like C2-type domains span residues 64-160 (PRIV…ASLE), 166-253 (DDFR…AELV), 258-342 (PSFL…GSLS), 347-440 (PQFV…ALLE), and 450-531 (PPII…GEAT). A disulfide bond links cysteine 85 and cysteine 143. An N-linked (GlcNAc...) asparagine glycan is attached at asparagine 156. Cystine bridges form between cysteine 187-cysteine 236 and cysteine 279-cysteine 326. N-linked (GlcNAc...) asparagine glycans are attached at residues asparagine 355, asparagine 363, asparagine 410, asparagine 459, and asparagine 503. The cysteines at positions 368 and 424 are disulfide-linked. Residues cysteine 472 and cysteine 521 are joined by a disulfide bond. Disordered regions lie at residues 540–561 (EDWG…PPSQ) and 639–662 (EPSP…EDPW). Over residues 543–552 (GASPGPATGP) the composition is skewed to low complexity. Fibronectin type-III domains lie at 558 to 652 (PPSQ…TQDS), 672 to 766 (AVRM…IPEE), and 771 to 869 (PPQG…FPPA). Residues 646–655 (PVQTQDSSLS) are compositionally biased toward polar residues. Asparagine 784, asparagine 813, and asparagine 820 each carry an N-linked (GlcNAc...) asparagine glycan. Residues 892–912 (AFLAGSSAACGALLLGFCAAL) traverse the membrane as a helical segment. Topologically, residues 913-1402 (YRRQKQRKEL…PGRNRREEPR (490 aa)) are cytoplasmic. Disordered regions lie at residues 965–989 (SWPH…NPDP), 1032–1307 (FHGG…VVQA), and 1340–1402 (GRPS…EEPR). 2 stretches are compositionally biased toward polar residues: residues 1038–1049 (QHSSGDPSTWSQ) and 1142–1152 (PSPTSSYGQQS). The span at 1158 to 1169 (PSPPDPPQPPTD) shows a compositional bias: pro residues. Low complexity-rich tracts occupy residues 1178–1191 (RRVP…LSVS) and 1215–1228 (ASPS…SSAP). Residues 1243–1254 (HGHRARIRKKPK) are compositionally biased toward basic residues. Serine 1263 carries the post-translational modification Phosphoserine. Residues 1294–1304 (LERERSGERRV) are compositionally biased toward basic and acidic residues. The span at 1346–1357 (SHGQGTSTCSTA) shows a compositional bias: polar residues. A compositionally biased stretch (low complexity) spans 1358–1371 (GSNSSRGSNSSRGS).

Belongs to the immunoglobulin superfamily. ROBO family. As to quaternary structure, interacts (via Fibronectin type-III 1 domain) with NELL2 (via the EGF domains) with a 3:3 stoichiometry; this interaction promotes oligomerization of ROBO3 resulting in the repulsion of commissural axons in the midline. As to expression, detected in embryonal spinal cord and hindbrain.

The protein resides in the membrane. Receptor involved in axon guidance during development. Acts as a multifunctional regulator of pathfinding that simultaneously mediates NELL2 repulsion, inhibits SLIT repulsion, and facilitates Netrin-1/NTN1 attraction. In spinal cord development plays a role in guiding commissural axons probably by preventing premature sensitivity to Slit proteins thus inhibiting Slit signaling through ROBO1/ROBO2. Binding OF NELL2 to the receptor ROBO3 promotes oligomerization of ROBO3, resulting in the repulsion of commissural axons in the midline. ROBO3 also indirectly boosts axon attraction to NTN1 without interacting with NTN1 itself. Its function is as follows. Mediates NELL2 premature repulsion of commissural axons during midline crossing. In terms of biological role, after midline crossing by the commissural axons, may, in concert with ROBO1 and ROBO2, prevent midline recrossing. Does not mediate NELL2 signaling. The chain is Roundabout homolog 3 from Mus musculus (Mouse).